The sequence spans 146 residues: D-aminoacyl-tRNA deacylase (146 aa).

Positions 138 to 139 (GP) match the Gly-cisPro motif, important for rejection of L-amino acids motif.

It belongs to the DTD family. As to quaternary structure, homodimer.

It localises to the cytoplasm. The enzyme catalyses glycyl-tRNA(Ala) + H2O = tRNA(Ala) + glycine + H(+). It carries out the reaction a D-aminoacyl-tRNA + H2O = a tRNA + a D-alpha-amino acid + H(+). An aminoacyl-tRNA editing enzyme that deacylates mischarged D-aminoacyl-tRNAs. Also deacylates mischarged glycyl-tRNA(Ala), protecting cells against glycine mischarging by AlaRS. Acts via tRNA-based rather than protein-based catalysis; rejects L-amino acids rather than detecting D-amino acids in the active site. By recycling D-aminoacyl-tRNA to D-amino acids and free tRNA molecules, this enzyme counteracts the toxicity associated with the formation of D-aminoacyl-tRNA entities in vivo and helps enforce protein L-homochirality. This Xanthomonas oryzae pv. oryzae (strain MAFF 311018) protein is D-aminoacyl-tRNA deacylase.